The following is a 144-amino-acid chain: Large ribosomal subunit protein uL15 (144 aa).

The segment at Met1 to Gln54 is disordered. 2 stretches are compositionally biased toward gly residues: residues Arg21–Ala31 and Ser42–Gly52.

It belongs to the universal ribosomal protein uL15 family. Part of the 50S ribosomal subunit.

Its function is as follows. Binds to the 23S rRNA. The sequence is that of Large ribosomal subunit protein uL15 from Shewanella baltica (strain OS223).